A 220-amino-acid chain; its full sequence is Iron-sulfur cluster repair protein YtfE (220 aa).

Belongs to the RIC family. YtfE subfamily. In terms of assembly, homodimer.

It localises to the cytoplasm. Di-iron-containing protein involved in the repair of iron-sulfur clusters damaged by oxidative and nitrosative stress conditions. The polypeptide is Iron-sulfur cluster repair protein YtfE (Escherichia coli (strain SMS-3-5 / SECEC)).